Consider the following 800-residue polypeptide: Protein SPT2 homolog (800 aa).

Positions 1 to 687 (MDFHSVLRMA…PGHRPNMQPP (687 aa)) are important for interaction with DNA. Residues 53-82 (QEIQNKEVEAKRKKEGLLAKRKELKHDRKA) adopt a coiled-coil conformation. Disordered regions lie at residues 70–173 (LAKR…PALN), 197–646 (KEER…MAKP), and 661–698 (VPKSINGHMNGMRSAVPPGHRPNMQPPGRPLPPITSSY). The segment covering 124 to 137 (TEEDEEYMTEEELY) has biased composition (acidic residues). A compositionally biased stretch (low complexity) spans 155–164 (PQKVAKAAPG). The stretch at 196–224 (KKEERLRTAEELKELEFLERKAQKADRKD) forms a coiled coil. 2 stretches are compositionally biased toward basic and acidic residues: residues 197-226 (KEERLRTAEELKELEFLERKAQKADRKDPM) and 249-259 (HSVEKRSHENS). Polar residues predominate over residues 260 to 272 (KSSSTEQNGTFRK). Residues 273–295 (SSSDNRSREEKSGSVFHTKDSKF) show a composition bias toward basic and acidic residues. Composition is skewed to low complexity over residues 328-360 (SGSTSLRPSSGGSSSVSGRPSGSSEKPGSSSGK), 367-377 (SSSARSSSGSG), 390-424 (GASGSGSARSVGESGSRSGKPTGASGSGLARSVGA), 443-501 (GVSG…SVSG), and 514-581 (GAPG…ASSS). The span at 608 to 626 (NSVRHNTTSISVSARSSLG) shows a compositional bias: polar residues. A compositionally biased stretch (pro residues) spans 684–693 (MQPPGRPLPP). Positions 688 to 800 (GRPLPPITSS…LKSAKKMKSR (113 aa)) are important for interaction with histones. Residues 756 to 800 (REQQKEEARSLRLGIQEDLEELRREEEELKQKAKQLKSAKKMKSR) are a coiled coil.

It belongs to the SPT2 family. As to quaternary structure, interacts with histones. Interacts with a heterotetrameric complex formed by histone H3 and H4, especially when the histone tetramer is not bound to DNA.

Its subcellular location is the nucleus. The protein localises to the nucleolus. In terms of biological role, histone chaperone that stabilizes pre-existing histone tetramers and regulates replication-independent histone exchange on chromatin. Required for normal chromatin refolding in the coding region of transcribed genes, and for the suppression of spurious transcription. Binds DNA and histones and promotes nucleosome assembly (in vitro). Facilitates formation of tetrameric histone complexes containing histone H3 and H4. Modulates RNA polymerase 1-mediated transcription. Binds DNA, with a preference for branched DNA species, such as Y-form DNA and Holliday junction DNA. The sequence is that of Protein SPT2 homolog (spty2d1) from Xenopus laevis (African clawed frog).